We begin with the raw amino-acid sequence, 808 residues long: Probable phosphoketolase 1 (808 aa).

Belongs to the XFP family. Thiamine diphosphate serves as cofactor.

The protein is Probable phosphoketolase 1 of Nostoc sp. (strain PCC 7120 / SAG 25.82 / UTEX 2576).